The chain runs to 559 residues: Chaperonin GroEL 1 (559 aa).

ATP is bound by residues 29-32 (TIGP), 86-90 (DGTTT), Gly-413, 476-478 (NAL), and Asp-492. The disordered stretch occupies residues 521 to 541 (KPEPPAPAPAGDGDPMGGMGG).

This sequence belongs to the chaperonin (HSP60) family. As to quaternary structure, forms a cylinder of 14 subunits composed of two heptameric rings stacked back-to-back. Interacts with the co-chaperonin GroES.

Its subcellular location is the cytoplasm. The enzyme catalyses ATP + H2O + a folded polypeptide = ADP + phosphate + an unfolded polypeptide.. Its function is as follows. Together with its co-chaperonin GroES, plays an essential role in assisting protein folding. The GroEL-GroES system forms a nano-cage that allows encapsulation of the non-native substrate proteins and provides a physical environment optimized to promote and accelerate protein folding. This is Chaperonin GroEL 1 from Synechococcus sp. (strain CC9605).